Here is a 413-residue protein sequence, read N- to C-terminus: Protein cycle (413 aa).

The tract at residues 1–43 (MEVQEFCENMEEIEDENYDEEKSARTSDENRKQNHSEIEKRRR) is disordered. Positions 8–19 (ENMEEIEDENYD) are enriched in acidic residues. Residues 20–41 (EEKSARTSDENRKQNHSEIEKR) show a composition bias toward basic and acidic residues. In terms of domain architecture, bHLH spans 30-83 (NRKQNHSEIEKRRRDKMNTYINELSSMIPMCFAMQRKLDKLTVLRMAVQHLRGI). One can recognise a PAS 1 domain in the interval 104–175 (DQELKMIILQ…EQLSSLEQCP (72 aa)). The tract at residues 219-242 (NQIKEESDTSSSSRSSTKRKSRLT) is disordered. Residues 297 to 367 (PASLDNHPNI…ESHKMVMQVP (71 aa)) form the PAS 2 domain. A PAC domain is found at 372 to 413 (TQVYRFRCKDNSYIQLQSEWRAFKNPWTSEIDYIIAKNSVFL).

Efficient DNA binding requires dimerization with another bHLH protein. Forms a heterodimer with Clock in order to activate PER and TIM transcription. In terms of tissue distribution, expressed in head and ovary.

Its subcellular location is the nucleus. Putative transcription factor involved in the generation of biological rhythms. Activates cycling transcription of Period (PER) and Timeless (TIM) by binding to the E-box (5'-CACGTG-3') present in their promoters. The protein is Protein cycle (cyc) of Drosophila melanogaster (Fruit fly).